The primary structure comprises 296 residues: Cytochrome bc1 complex cytochrome c subunit (296 aa).

Over residues 1–19 (MMETNPQTSEGAGKAQSSA) the composition is skewed to polar residues. The tract at residues 1–27 (MMETNPQTSEGAGKAQSSAKKVKNRRK) is disordered. Residues 32 to 52 (VAGAMALTIGLSGAGILATAI) traverse the membrane as a helical segment. 2 consecutive Cytochrome c domains span residues 67–147 (ALIA…AANG) and 177–255 (LDVS…KSTK). Positions 80, 83, 84, 190, 193, and 194 each coordinate heme c. The chain crosses the membrane as a helical span at residues 274–294 (GLFMWGIGIMVLIAAAMWIGS).

The cytochrome bc1 complex is composed of a cytochrome b (QcrB), the Rieske iron-sulfur protein (QcrA) and a diheme cytochrome c (QcrC) subunit. The bc1 complex forms a supercomplex with cytochrome c oxidase (cytochrome aa3). Post-translationally, binds 2 heme c groups covalently per subunit.

It localises to the cell membrane. It catalyses the reaction a quinol + 2 Fe(III)-[cytochrome c](out) = a quinone + 2 Fe(II)-[cytochrome c](out) + 2 H(+)(out). Cytochrome c1 subunit of the cytochrome bc1 complex, an essential component of the respiratory electron transport chain required for ATP synthesis. The bc1 complex catalyzes the oxidation of menaquinol and the reduction of cytochrome c in the respiratory chain. The bc1 complex operates through a Q-cycle mechanism that couples electron transfer to generation of the proton gradient that drives ATP synthesis. This is Cytochrome bc1 complex cytochrome c subunit (qcrC) from Corynebacterium efficiens (strain DSM 44549 / YS-314 / AJ 12310 / JCM 11189 / NBRC 100395).